The following is a 278-amino-acid chain: Sulfur carrier protein FdhD (278 aa).

C121 serves as the catalytic Cysteine persulfide intermediate. 260–265 (FCKPGR) is a Mo-bis(molybdopterin guanine dinucleotide) binding site.

The protein belongs to the FdhD family.

It localises to the cytoplasm. Functionally, required for formate dehydrogenase (FDH) activity. Acts as a sulfur carrier protein that transfers sulfur from IscS to the molybdenum cofactor prior to its insertion into FDH. This chain is Sulfur carrier protein FdhD, found in Salmonella schwarzengrund (strain CVM19633).